The chain runs to 435 residues: 3-ketoacyl-CoA thiolase (435 aa).

Catalysis depends on Cys-98, which acts as the Acyl-thioester intermediate. Active-site proton acceptor residues include His-391 and Cys-421.

The protein belongs to the thiolase-like superfamily. Thiolase family. In terms of assembly, heterotetramer of two alpha chains (FadJ) and two beta chains (FadI).

It localises to the cytoplasm. It catalyses the reaction an acyl-CoA + acetyl-CoA = a 3-oxoacyl-CoA + CoA. It participates in lipid metabolism; fatty acid beta-oxidation. Catalyzes the final step of fatty acid oxidation in which acetyl-CoA is released and the CoA ester of a fatty acid two carbons shorter is formed. The sequence is that of 3-ketoacyl-CoA thiolase from Vibrio cholerae serotype O1 (strain ATCC 39541 / Classical Ogawa 395 / O395).